A 382-amino-acid polypeptide reads, in one-letter code: Alkanesulfonate monooxygenase (382 aa).

Belongs to the SsuD family. As to quaternary structure, homotetramer.

It catalyses the reaction an alkanesulfonate + FMNH2 + O2 = an aldehyde + FMN + sulfite + H2O + 2 H(+). Functionally, catalyzes the desulfonation of aliphatic sulfonates. The protein is Alkanesulfonate monooxygenase of Yersinia pseudotuberculosis serotype IB (strain PB1/+).